A 152-amino-acid chain; its full sequence is Acidic phospholipase A2 57 (152 aa).

The signal sequence occupies residues 1–21; it reads MYPAHLLGLLAVCVSLLGAAS. Residues 22-27 constitute a propeptide that is removed on maturation; it reads IPPLPL. 7 disulfide bridges follow: C38-C104, C54-C151, C56-C72, C71-C132, C78-C125, C88-C118, and C111-C123. Ca(2+) contacts are provided by Y55, G57, and G59. The active site involves H75. D76 lines the Ca(2+) pocket. The active site involves D126.

Belongs to the phospholipase A2 family. Group I subfamily. D49 sub-subfamily. It depends on Ca(2+) as a cofactor. Expressed by the venom gland.

It localises to the secreted. It carries out the reaction a 1,2-diacyl-sn-glycero-3-phosphocholine + H2O = a 1-acyl-sn-glycero-3-phosphocholine + a fatty acid + H(+). Its function is as follows. PLA2 catalyzes the calcium-dependent hydrolysis of the 2-acyl groups in 3-sn-phosphoglycerides. The protein is Acidic phospholipase A2 57 of Hydrophis hardwickii (Hardwick's spine-bellied seasnake).